A 32-amino-acid chain; its full sequence is ATP synthase 28 kDa subunit, mitochondrial (32 aa).

The protein localises to the mitochondrion. It localises to the mitochondrion inner membrane. Mitochondrial membrane ATP synthase (F(1)F(0) ATP synthase or Complex V) produces ATP from ADP in the presence of a proton gradient across the membrane which is generated by electron transport complexes of the respiratory chain. F-type ATPases consist of two structural domains, F(1) - containing the extramembraneous catalytic core and F(0) - containing the membrane proton channel, linked together by a central stalk and a peripheral stalk. During catalysis, ATP synthesis in the catalytic domain of F(1) is coupled via a rotary mechanism of the central stalk subunits to proton translocation. Part of the complex F(0) domain. The sequence is that of ATP synthase 28 kDa subunit, mitochondrial from Spinacia oleracea (Spinach).